The chain runs to 227 residues: Small ribosomal subunit protein uS3 (227 aa).

One can recognise a KH type-2 domain in the interval 39–107 (VRQLLQKRLK…PVHITIEEVR (69 aa)).

It belongs to the universal ribosomal protein uS3 family. As to quaternary structure, part of the 30S ribosomal subunit. Forms a tight complex with proteins S10 and S14.

Its function is as follows. Binds the lower part of the 30S subunit head. Binds mRNA in the 70S ribosome, positioning it for translation. In Coxiella burnetii (strain CbuK_Q154) (Coxiella burnetii (strain Q154)), this protein is Small ribosomal subunit protein uS3.